A 278-amino-acid chain; its full sequence is Bicarbonate transport ATP-binding protein CmpD (278 aa).

The ABC transporter domain maps to 21–254 (LIVENVSKIY…RPRDRERIME (234 aa)). ATP is bound at residue 57–64 (GHSGCGKS).

The protein belongs to the ABC transporter superfamily. Nitrate/nitrite/cyanate uptake transporter (NitT) (TC 3.A.1.16) family. In terms of assembly, the complex is composed of two ATP-binding proteins (CmpC and CmpD), a transmembrane protein (CmpB) and a solute-binding protein (CmpA).

The protein resides in the cell inner membrane. Part of the ABC transporter complex CmpABCD involved in bicarbonate transport. Responsible for energy coupling to the transport system. The chain is Bicarbonate transport ATP-binding protein CmpD (cmpD) from Synechococcus elongatus (strain ATCC 33912 / PCC 7942 / FACHB-805) (Anacystis nidulans R2).